The chain runs to 413 residues: Protein MANNAN SYNTHESIS-RELATED (413 aa).

Over 1–5 (MNSME) the chain is Cytoplasmic. The chain crosses the membrane as a helical; Signal-anchor for type II membrane protein span at residues 6–26 (IRQAFAGLLTLSMFIMLGNMI). The Lumenal portion of the chain corresponds to 27 to 413 (KKDHFDYPAE…KNHLAYKCFC (387 aa)). Asn-207 carries N-linked (GlcNAc...) asparagine glycosylation. Residue 255 to 257 (DLR) participates in substrate binding.

It belongs to the glycosyltransferase GT106 family. Highly and specifically expressed in the endosperm.

It localises to the golgi apparatus membrane. It functions in the pathway glycan biosynthesis. Its function is as follows. Glycosyltransferase involved in mannan biosynthesis. This Trigonella foenum-graecum (Fenugreek) protein is Protein MANNAN SYNTHESIS-RELATED.